The sequence spans 708 residues: Nicastrin (708 aa).

The first 34 residues, 1–34, serve as a signal peptide directing secretion; that stretch reads MATARGGSGPDPGSRGLLLLSFSVVLAGLCGGNS. Topologically, residues 35–668 are lumenal; sequence VERKIYIPLN…IFLIASKELE (634 aa). N-linked (GlcNAc...) asparagine glycosylation is found at Asn44, Asn54, and Asn128. A disulfide bond links Cys49 and Cys61. A disulfide bridge connects residues Cys139 and Cys158. Asn186 and Asn203 each carry an N-linked (GlcNAc...) asparagine glycan. Disulfide bonds link Cys194–Cys212 and Cys229–Cys247. 11 N-linked (GlcNAc...) asparagine glycosylation sites follow: Asn263, Asn386, Asn434, Asn463, Asn507, Asn529, Asn561, Asn572, Asn579, Asn593, and Asn611. A disulfide bridge links Cys585 with Cys619. The chain crosses the membrane as a helical span at residues 669–689; that stretch reads FITLIVGFSILVFSLIVTYCI. The Cytoplasmic segment spans residues 690–708; that stretch reads NAKADVLFVAPREPGAVSY.

It belongs to the nicastrin family. Component of the gamma-secretase complex. The functional gamma-secretase complex is composed of at least four polypeptides: a presenilin homodimer (PSEN1 or PSEN2), nicastrin (NCSTN), APH1 (APH1A or APH1B) and PEN2. Binds to proteolytic processed C-terminal fragments C83 and C99 of the amyloid precursor protein (APP). Interacts with PSEN1 and PSEN2. In terms of processing, N-glycosylated.

Its subcellular location is the membrane. The protein localises to the cytoplasmic vesicle membrane. It is found in the melanosome. In terms of biological role, essential subunit of the gamma-secretase complex, an endoprotease complex that catalyzes the intramembrane cleavage of integral membrane proteins such as Notch receptors and APP (amyloid-beta precursor protein). The gamma-secretase complex plays a role in Notch and Wnt signaling cascades and regulation of downstream processes via its role in processing key regulatory proteins, and by regulating cytosolic CTNNB1 levels. This chain is Nicastrin (Ncstn), found in Rattus norvegicus (Rat).